A 625-amino-acid chain; its full sequence is Chaperone protein HtpG (625 aa).

Residues 1-337 are a; substrate-binding; that stretch reads MSTNQETRGF…TNDLPLNVSR (337 aa). Positions 338-554 are b; the sequence is EILQENKITA…NDEMTTQMAK (217 aa). The interval 555 to 625 is c; the sequence is LFAAMGQKAP…FIKRMNKLLG (71 aa).

The protein belongs to the heat shock protein 90 family. Homodimer.

The protein localises to the cytoplasm. In terms of biological role, molecular chaperone. Has ATPase activity. In Actinobacillus pleuropneumoniae serotype 5b (strain L20), this protein is Chaperone protein HtpG.